A 536-amino-acid polypeptide reads, in one-letter code: Phosphoenolpyruvate carboxykinase (ATP) (536 aa).

Substrate contacts are provided by Arg-61, Tyr-195, and Lys-201. ATP is bound by residues Lys-201, His-220, and 236–244 (GLSGTGKTT). Residues Lys-201 and His-220 each contribute to the Mn(2+) site. Residue Asp-257 coordinates Mn(2+). Glu-285, Arg-323, and Thr-448 together coordinate ATP. Arg-323 contributes to the substrate binding site.

The protein belongs to the phosphoenolpyruvate carboxykinase (ATP) family. Requires Mn(2+) as cofactor.

The protein resides in the cytoplasm. The catalysed reaction is oxaloacetate + ATP = phosphoenolpyruvate + ADP + CO2. Its pathway is carbohydrate biosynthesis; gluconeogenesis. Involved in the gluconeogenesis. Catalyzes the conversion of oxaloacetate (OAA) to phosphoenolpyruvate (PEP) through direct phosphoryl transfer between the nucleoside triphosphate and OAA. The protein is Phosphoenolpyruvate carboxykinase (ATP) of Methylobacterium sp. (strain 4-46).